The primary structure comprises 215 residues: 3-isopropylmalate dehydratase small subunit (215 aa).

It belongs to the LeuD family. LeuD type 1 subfamily. In terms of assembly, heterodimer of LeuC and LeuD.

It carries out the reaction (2R,3S)-3-isopropylmalate = (2S)-2-isopropylmalate. The protein operates within amino-acid biosynthesis; L-leucine biosynthesis; L-leucine from 3-methyl-2-oxobutanoate: step 2/4. Catalyzes the isomerization between 2-isopropylmalate and 3-isopropylmalate, via the formation of 2-isopropylmaleate. This is 3-isopropylmalate dehydratase small subunit from Xylella fastidiosa (strain M12).